The primary structure comprises 122 residues: MIQMQSNLDVADNSGAKRVQCIKVLGGSKRRFAGVGDIIVVSVKEAQPRARVKKGDVHRAVIVRTKKDVRRTDGSVIRFDSNAAVLVGKNEEPIGTRIFGPVVRELRGKGFMKIISLAPEVL.

This sequence belongs to the universal ribosomal protein uL14 family. In terms of assembly, part of the 50S ribosomal subunit. Forms a cluster with proteins L3 and L19. In the 70S ribosome, L14 and L19 interact and together make contacts with the 16S rRNA in bridges B5 and B8.

Binds to 23S rRNA. Forms part of two intersubunit bridges in the 70S ribosome. The polypeptide is Large ribosomal subunit protein uL14 (Novosphingobium aromaticivorans (strain ATCC 700278 / DSM 12444 / CCUG 56034 / CIP 105152 / NBRC 16084 / F199)).